The following is a 314-amino-acid chain: tRNA pseudouridine synthase B (314 aa).

His43 serves as a coordination point for substrate. Asp48 (nucleophile) is an active-site residue. 3 residues coordinate substrate: Tyr76, Tyr179, and Leu200.

This sequence belongs to the pseudouridine synthase TruB family. Type 1 subfamily.

It carries out the reaction uridine(55) in tRNA = pseudouridine(55) in tRNA. Functionally, responsible for synthesis of pseudouridine from uracil-55 in the psi GC loop of transfer RNAs. This chain is tRNA pseudouridine synthase B, found in Shigella dysenteriae serotype 1 (strain Sd197).